The following is a 385-amino-acid chain: Lipid-A-disaccharide synthase (385 aa).

This sequence belongs to the LpxB family.

It carries out the reaction a lipid X + a UDP-2-N,3-O-bis[(3R)-3-hydroxyacyl]-alpha-D-glucosamine = a lipid A disaccharide + UDP + H(+). It participates in bacterial outer membrane biogenesis; LPS lipid A biosynthesis. Condensation of UDP-2,3-diacylglucosamine and 2,3-diacylglucosamine-1-phosphate to form lipid A disaccharide, a precursor of lipid A, a phosphorylated glycolipid that anchors the lipopolysaccharide to the outer membrane of the cell. This Rickettsia canadensis (strain McKiel) protein is Lipid-A-disaccharide synthase.